The sequence spans 145 residues: Transcription antitermination protein NusB (145 aa).

It belongs to the NusB family.

Its function is as follows. Involved in transcription antitermination. Required for transcription of ribosomal RNA (rRNA) genes. Binds specifically to the boxA antiterminator sequence of the ribosomal RNA (rrn) operons. In Thiobacillus denitrificans (strain ATCC 25259 / T1), this protein is Transcription antitermination protein NusB.